The sequence spans 412 residues: L-cysteine:1D-myo-inositol 2-amino-2-deoxy-alpha-D-glucopyranoside ligase (412 aa).

Cys43 contacts Zn(2+). L-cysteinyl-5'-AMP is bound by residues 43-46 (CGIT), Thr58, and 81-83 (NVT). The 'HIGH' region motif lies at 45 to 55 (ITPYDATHLGH). The short motif at 187 to 192 (ERGGDP) is the 'ERGGDP' region element. Position 227 (Trp227) interacts with L-cysteinyl-5'-AMP. Cys231 serves as a coordination point for Zn(2+). 249–251 (GSD) is an L-cysteinyl-5'-AMP binding site. Residue His256 participates in Zn(2+) binding. Ile283 provides a ligand contact to L-cysteinyl-5'-AMP. Residues 289–293 (KMSKS) carry the 'KMSKS' region motif.

Belongs to the class-I aminoacyl-tRNA synthetase family. MshC subfamily. In terms of assembly, monomer. Requires Zn(2+) as cofactor.

The catalysed reaction is 1D-myo-inositol 2-amino-2-deoxy-alpha-D-glucopyranoside + L-cysteine + ATP = 1D-myo-inositol 2-(L-cysteinylamino)-2-deoxy-alpha-D-glucopyranoside + AMP + diphosphate + H(+). Its function is as follows. Catalyzes the ATP-dependent condensation of GlcN-Ins and L-cysteine to form L-Cys-GlcN-Ins. The polypeptide is L-cysteine:1D-myo-inositol 2-amino-2-deoxy-alpha-D-glucopyranoside ligase (mshC) (Mycolicibacterium smegmatis (strain ATCC 700084 / mc(2)155) (Mycobacterium smegmatis)).